Here is a 239-residue protein sequence, read N- to C-terminus: Uridylate kinase (239 aa).

An ATP-binding site is contributed by 12–15 (KLSG). Gly53 contacts UMP. 2 residues coordinate ATP: Gly54 and Arg58. UMP is bound by residues Asp73 and 135-142 (TGSPCFTT). ATP is bound by residues Thr162, Tyr168, and Asp171.

The protein belongs to the UMP kinase family. Homohexamer.

It localises to the cytoplasm. The catalysed reaction is UMP + ATP = UDP + ADP. It functions in the pathway pyrimidine metabolism; CTP biosynthesis via de novo pathway; UDP from UMP (UMPK route): step 1/1. Its activity is regulated as follows. Inhibited by UTP. Its function is as follows. Catalyzes the reversible phosphorylation of UMP to UDP. The sequence is that of Uridylate kinase from Ruthia magnifica subsp. Calyptogena magnifica.